The sequence spans 565 residues: Proline--tRNA ligase (565 aa).

This sequence belongs to the class-II aminoacyl-tRNA synthetase family. ProS type 1 subfamily. In terms of assembly, homodimer.

It is found in the cytoplasm. It catalyses the reaction tRNA(Pro) + L-proline + ATP = L-prolyl-tRNA(Pro) + AMP + diphosphate. Its function is as follows. Catalyzes the attachment of proline to tRNA(Pro) in a two-step reaction: proline is first activated by ATP to form Pro-AMP and then transferred to the acceptor end of tRNA(Pro). As ProRS can inadvertently accommodate and process non-cognate amino acids such as alanine and cysteine, to avoid such errors it has two additional distinct editing activities against alanine. One activity is designated as 'pretransfer' editing and involves the tRNA(Pro)-independent hydrolysis of activated Ala-AMP. The other activity is designated 'posttransfer' editing and involves deacylation of mischarged Ala-tRNA(Pro). The misacylated Cys-tRNA(Pro) is not edited by ProRS. In Campylobacter lari (strain RM2100 / D67 / ATCC BAA-1060), this protein is Proline--tRNA ligase.